The sequence spans 74 residues: MYTNSDFVVIKALEDGVNVIGLTRGADTRFHHSEKLDKGEVLIAQFTEHTSAIKVRGKAYIQTRHGVIESEGKK.

This sequence belongs to the MtrB family. Oligomer of 11 identical subunits arranged in doughnut-like structure.

Functionally, required for transcription attenuation control in the Trp operon. This trans-acting factor seems to recognize a 10 bases nucleotide sequence in the Trp leader transcript causing transcription termination. Binds the leader RNA only in presence of L-tryptophan. The protein is Transcription attenuation protein MtrB (mtrB) of Geobacillus stearothermophilus (Bacillus stearothermophilus).